Reading from the N-terminus, the 254-residue chain is Alcohol dehydrogenase (254 aa).

10–33 is an NAD(+) binding site; the sequence is FVAGLGGIGLDTNREIVKSGPKNL. Ser-138 contributes to the substrate binding site. Tyr-151 serves as the catalytic Proton acceptor.

This sequence belongs to the short-chain dehydrogenases/reductases (SDR) family. Homodimer.

The catalysed reaction is a primary alcohol + NAD(+) = an aldehyde + NADH + H(+). The enzyme catalyses a secondary alcohol + NAD(+) = a ketone + NADH + H(+). The sequence is that of Alcohol dehydrogenase (Adh) from Scaptomyza albovittata (Fruit fly).